Here is a 201-residue protein sequence, read N- to C-terminus: ATP-dependent Clp protease proteolytic subunit (201 aa).

S98 serves as the catalytic Nucleophile. H123 is an active-site residue.

It belongs to the peptidase S14 family. In terms of assembly, fourteen ClpP subunits assemble into 2 heptameric rings which stack back to back to give a disk-like structure with a central cavity, resembling the structure of eukaryotic proteasomes.

It localises to the cytoplasm. The enzyme catalyses Hydrolysis of proteins to small peptides in the presence of ATP and magnesium. alpha-casein is the usual test substrate. In the absence of ATP, only oligopeptides shorter than five residues are hydrolyzed (such as succinyl-Leu-Tyr-|-NHMec, and Leu-Tyr-Leu-|-Tyr-Trp, in which cleavage of the -Tyr-|-Leu- and -Tyr-|-Trp bonds also occurs).. Cleaves peptides in various proteins in a process that requires ATP hydrolysis. Has a chymotrypsin-like activity. Plays a major role in the degradation of misfolded proteins. This Desulfatibacillum aliphaticivorans protein is ATP-dependent Clp protease proteolytic subunit.